Consider the following 85-residue polypeptide: Putative membrane protein insertion efficiency factor (85 aa).

The tract at residues 62–85 is disordered; it reads PLGSDGYDPVPEPKDRKPPHSPAG.

Belongs to the UPF0161 family.

The protein resides in the cell inner membrane. Its function is as follows. Could be involved in insertion of integral membrane proteins into the membrane. The sequence is that of Putative membrane protein insertion efficiency factor from Ruegeria pomeroyi (strain ATCC 700808 / DSM 15171 / DSS-3) (Silicibacter pomeroyi).